The primary structure comprises 229 residues: Large ribosomal subunit protein uL1 (229 aa).

This sequence belongs to the universal ribosomal protein uL1 family. As to quaternary structure, part of the 50S ribosomal subunit.

Its function is as follows. Binds directly to 23S rRNA. The L1 stalk is quite mobile in the ribosome, and is involved in E site tRNA release. Protein L1 is also a translational repressor protein, it controls the translation of the L11 operon by binding to its mRNA. In Lactococcus lactis subsp. cremoris (strain MG1363), this protein is Large ribosomal subunit protein uL1.